A 99-amino-acid polypeptide reads, in one-letter code: Aspartyl/glutamyl-tRNA(Asn/Gln) amidotransferase subunit C (99 aa).

This sequence belongs to the GatC family. In terms of assembly, heterotrimer of A, B and C subunits.

It carries out the reaction L-glutamyl-tRNA(Gln) + L-glutamine + ATP + H2O = L-glutaminyl-tRNA(Gln) + L-glutamate + ADP + phosphate + H(+). It catalyses the reaction L-aspartyl-tRNA(Asn) + L-glutamine + ATP + H2O = L-asparaginyl-tRNA(Asn) + L-glutamate + ADP + phosphate + 2 H(+). In terms of biological role, allows the formation of correctly charged Asn-tRNA(Asn) or Gln-tRNA(Gln) through the transamidation of misacylated Asp-tRNA(Asn) or Glu-tRNA(Gln) in organisms which lack either or both of asparaginyl-tRNA or glutaminyl-tRNA synthetases. The reaction takes place in the presence of glutamine and ATP through an activated phospho-Asp-tRNA(Asn) or phospho-Glu-tRNA(Gln). The polypeptide is Aspartyl/glutamyl-tRNA(Asn/Gln) amidotransferase subunit C (Burkholderia mallei (strain NCTC 10247)).